A 1374-amino-acid chain; its full sequence is DNA-directed RNA polymerase subunit beta' (1374 aa).

The disordered stretch occupies residues 1 to 47 (MTSTSPKSRKPSTKTTKSKSKSKSKSKAAKAAAASASPALARTPPQF). Basic residues predominate over residues 7 to 28 (KSRKPSTKTTKSKSKSKSKSKA). Over residues 29–45 (AKAAAASASPALARTPP) the composition is skewed to low complexity. Zn(2+) contacts are provided by Cys-258, Cys-325, Cys-332, and Cys-335. The tract at residues 1343–1374 (VRPTGENELEEEQLPDPSALEGLQQEGLLTEE) is disordered. The span at 1362-1374 (LEGLQQEGLLTEE) shows a compositional bias: low complexity.

The protein belongs to the RNA polymerase beta' chain family. RpoC2 subfamily. In cyanobacteria the RNAP catalytic core is composed of 2 alpha, 1 beta, 1 beta', 1 gamma and 1 omega subunit. When a sigma factor is associated with the core the holoenzyme is formed, which can initiate transcription. Zn(2+) is required as a cofactor.

The enzyme catalyses RNA(n) + a ribonucleoside 5'-triphosphate = RNA(n+1) + diphosphate. DNA-dependent RNA polymerase catalyzes the transcription of DNA into RNA using the four ribonucleoside triphosphates as substrates. The chain is DNA-directed RNA polymerase subunit beta' from Prochlorococcus marinus (strain MIT 9303).